The sequence spans 304 residues: Ubiquitin thioesterase OTU1 (304 aa).

Residues 5–83 (RCKTREGTQL…IVEEDKSKLR (79 aa)) are UBX-like. The OTU domain maps to 105 to 230 (IVRRVVPADN…GIHYDPLQRQ (126 aa)). Positions 110-116 (VPADNSC) are cys-loop. The active site involves Asp113. Cys116 acts as the Nucleophile in catalysis. The interval 169–179 (IRREDTWGGAI) is variable-loop. The tract at residues 219 to 223 (YDGIH) is his-loop. Position 222 (Ile222) interacts with substrate. The active site involves His223. Residues 247–252 (DEALVQ) form an S2 site region. The C2H2-type zinc finger occupies 274–298 (LRCMACQKGLTGQSAARDHAKETGH). His298 is an active-site residue.

It localises to the cytoplasm. The catalysed reaction is Thiol-dependent hydrolysis of ester, thioester, amide, peptide and isopeptide bonds formed by the C-terminal Gly of ubiquitin (a 76-residue protein attached to proteins as an intracellular targeting signal).. Its function is as follows. Hydrolase that can remove conjugated ubiquitin from proteins and participates in endoplasmic reticulum-associated degradation (ERAD) for misfolded lumenal proteins. May act by triming the ubiquitin chain on the associated substrate to facilitate their threading through the VCP/p97 pore. Ubiquitin moieties on substrates may present a steric impediment to the threading process when the substrate is transferred to the VCP pore and threaded through VCP's axial channel. Mediates deubiquitination of 'Lys-27'-, 'Lys-29'- and 'Lys-33'-linked polyubiquitin chains. Also able to hydrolyze 'Lys-11'-linked ubiquitin chains. Cleaves both polyubiquitin and di-ubiquitin. The protein is Ubiquitin thioesterase OTU1 (yod1) of Xenopus laevis (African clawed frog).